Consider the following 373-residue polypeptide: Putative F-box/kelch-repeat protein At5g24040 (373 aa).

The F-box domain maps to 2-50 (VKWSELPPEILHLISLKIDNPFDLIHFRSVCSFWRSSSLLKFRHMTSLR). Kelch repeat units lie at residues 165–207 (NEYM…PFKG) and 262–308 (YDFH…CTFS).

The chain is Putative F-box/kelch-repeat protein At5g24040 from Arabidopsis thaliana (Mouse-ear cress).